Reading from the N-terminus, the 363-residue chain is Glutamate 5-kinase (363 aa).

An ATP-binding site is contributed by Lys6. Residues Ser46, Asp133, and Asn145 each coordinate substrate. ATP contacts are provided by residues Thr165–Asp166 and Thr207–Lys213. One can recognise a PUA domain in the interval His271 to Thr349.

This sequence belongs to the glutamate 5-kinase family.

The protein localises to the cytoplasm. The enzyme catalyses L-glutamate + ATP = L-glutamyl 5-phosphate + ADP. It functions in the pathway amino-acid biosynthesis; L-proline biosynthesis; L-glutamate 5-semialdehyde from L-glutamate: step 1/2. Functionally, catalyzes the transfer of a phosphate group to glutamate to form L-glutamate 5-phosphate. The chain is Glutamate 5-kinase from Deinococcus radiodurans (strain ATCC 13939 / DSM 20539 / JCM 16871 / CCUG 27074 / LMG 4051 / NBRC 15346 / NCIMB 9279 / VKM B-1422 / R1).